The sequence spans 118 residues: UPF0342 protein BC_0880 (118 aa).

It belongs to the UPF0342 family.

The protein is UPF0342 protein BC_0880 of Bacillus cereus (strain ATCC 14579 / DSM 31 / CCUG 7414 / JCM 2152 / NBRC 15305 / NCIMB 9373 / NCTC 2599 / NRRL B-3711).